The sequence spans 264 residues: uncharacterized protein (264 aa).

Positions 1 to 22 (MKRKLTICLLIALIFYNGNAKA) are cleaved as a signal peptide. The helical transmembrane segment at 227 to 247 (LLWVIITTGSIIITALTYVGY) threads the bilayer.

Its subcellular location is the membrane. This is an uncharacterized protein from Bacillus subtilis (strain 168).